A 546-amino-acid polypeptide reads, in one-letter code: CTP synthase (546 aa).

The tract at residues 1–266 (MTTRYIFVTG…DDLVVKRFGL (266 aa)) is amidoligase domain. CTP is bound at residue S14. S14 is a binding site for UTP. Residues 15–20 (SLGKGI) and D72 each bind ATP. 2 residues coordinate Mg(2+): D72 and E140. Residues 147–149 (DIE), 187–192 (KTKPTQ), and K223 each bind CTP. UTP is bound by residues 187–192 (KTKPTQ) and K223. Position 239 to 241 (239 to 241 (KDV)) interacts with ATP. Positions 291-542 (VIGMVGKYIE…VAAASAHQKR (252 aa)) constitute a Glutamine amidotransferase type-1 domain. G352 lines the L-glutamine pocket. Catalysis depends on C379, which acts as the Nucleophile; for glutamine hydrolysis. L-glutamine contacts are provided by residues 380-383 (LGMQ), E403, and R470. Residues H515 and E517 contribute to the active site.

The protein belongs to the CTP synthase family. Homotetramer.

It catalyses the reaction UTP + L-glutamine + ATP + H2O = CTP + L-glutamate + ADP + phosphate + 2 H(+). The catalysed reaction is L-glutamine + H2O = L-glutamate + NH4(+). It carries out the reaction UTP + NH4(+) + ATP = CTP + ADP + phosphate + 2 H(+). It participates in pyrimidine metabolism; CTP biosynthesis via de novo pathway; CTP from UDP: step 2/2. With respect to regulation, allosterically activated by GTP, when glutamine is the substrate; GTP has no effect on the reaction when ammonia is the substrate. The allosteric effector GTP functions by stabilizing the protein conformation that binds the tetrahedral intermediate(s) formed during glutamine hydrolysis. Inhibited by the product CTP, via allosteric rather than competitive inhibition. Its function is as follows. Catalyzes the ATP-dependent amination of UTP to CTP with either L-glutamine or ammonia as the source of nitrogen. Regulates intracellular CTP levels through interactions with the four ribonucleotide triphosphates. The polypeptide is CTP synthase (Shewanella sp. (strain MR-7)).